We begin with the raw amino-acid sequence, 486 residues long: Vacuolar-processing enzyme beta-isozyme (486 aa).

Positions Met-1–Ala-21 are cleaved as a signal peptide. His-169 is a catalytic residue. Catalysis depends on Cys-211, which acts as the Nucleophile. Cys-244 and Cys-258 are oxidised to a cystine. An N-linked (GlcNAc...) asparagine glycan is attached at Asn-309. 2 disulfides stabilise this stretch: Cys-420–Cys-450 and Cys-432–Cys-467.

Belongs to the peptidase C13 family. Auto-catalytic activation. As to expression, seed specific. Also expressed in the flowers and buds.

It localises to the vacuole. It is found in the protein storage vacuole. The catalysed reaction is Hydrolysis of proteins and small molecule substrates at -Asn-|-Xaa- bonds.. Asparagine-specific endopeptidase involved in the processing of vacuolar seed protein precursors into the mature forms. Probably involved in post-translational proteolysis of seed storage proteins in the protein storage vacuole of developing seeds. This chain is Vacuolar-processing enzyme beta-isozyme, found in Arabidopsis thaliana (Mouse-ear cress).